We begin with the raw amino-acid sequence, 240 residues long: MMNIGVIFAGGVGRRMNTKGKPKQFLEVHGKPIIVHTIDIFQNTEAIDAVVVVCVSDWLDYMNNLVERFNLTKVKAVVAGGETGQMSIFKGLEAAEQLATDDAVVLIHDGVRPLINEEVINANIQSVKETGSAVTSVRAKETVVLVNDSSKISEVVDRTRSFIAKAPQSFYLSDILSVERDAISKGITDAIDSSTLMGMYNRELTIVEGPYENIKITTPDDFYMFKALYDARENEQIYGM.

CTP contacts are provided by residues 8–11 (FAGG) and 81–87 (GETGQMS).

The protein belongs to the IspD/TarI cytidylyltransferase family. TarI subfamily.

The catalysed reaction is D-ribitol 5-phosphate + CTP + H(+) = CDP-L-ribitol + diphosphate. The protein operates within cell wall biogenesis; poly(ribitol phosphate) teichoic acid biosynthesis. Its function is as follows. Catalyzes the transfer of the cytidylyl group of CTP to D-ribitol 5-phosphate. This is Ribitol-5-phosphate cytidylyltransferase from Streptococcus agalactiae serotype V (strain ATCC BAA-611 / 2603 V/R).